We begin with the raw amino-acid sequence, 152 residues long: UPF0266 membrane protein YobD (152 aa).

A run of 3 helical transmembrane segments spans residues 6–26, 45–65, and 67–87; these read LVLI…QFIM, VDSV…VTSH, and AQMT…IFWI.

It belongs to the UPF0266 family.

The protein localises to the cell inner membrane. The chain is UPF0266 membrane protein YobD from Salmonella enteritidis PT4 (strain P125109).